The following is a 20-amino-acid chain: Styelin-A (20 aa).

In terms of tissue distribution, hemocytes and pharyngeal tissues.

The protein localises to the secreted. Bactericidal against several Gram-positive and Gram-negative bacteria. The polypeptide is Styelin-A (Styela clava (Sea squirt)).